A 226-amino-acid chain; its full sequence is Charged multivesicular body protein 4 (226 aa).

Residues 22 to 88 adopt a coiled-coil conformation; it reads IQKLRETENM…DGTLSTIEMQ (67 aa). The tract at residues 169–226 is disordered; the sequence is QENFDKEIIGIPEPTPTLPEAPTEDLPEKAKEKKKATTTTAVEDDDDPDMKQLLSWSN.

Belongs to the SNF7 family. Homopolymer; forms elongated striated filaments of uniform ~10nm width. Monomers interact in a staggered arrangement mediated by complementary charged electrostatic surfaces. Interacts with l(2)gd1 (via DM14 domains 1 and 3); the interaction is direct and blocks access to the surface involved in homopolymerization. This interaction may be required for the ESCRT-III complex role in multivesicular body formation. Expressed at considerably higher levels in testis than in ovary. Expressed in midgut, eye, mouthparts and male accessory gland.

Its subcellular location is the endosome. The protein resides in the multivesicular body. It localises to the midbody. Its activity is regulated as follows. May be regulated by aurB/Aurora kinase B-dependent phosphorylation. In terms of biological role, probable core polymerisation component of the endosomal sorting required for transport (ESCRT) III complex involved in multiple cellular processes requiring the outward bending of membranes, including vesicle budding, membrane repair and cytokinesis. The ESCRT pathway involves 4 complexes (ESCRT-0, -I, -II and -III) that sequentially assemble on the cytoplasmic side of membranes and induce membrane remodeling, budding and scission. As part of the ESCRT-III complex, involved in the budding of intraluminal vesicles (ILVs) into endosomes to form multivesicular bodies (MVBs), which target their contents for degradation via the endolysosomal pathway. Involved in regulation of signal transduction pathways, including the Notch and BMP/decapentaplegic (dpp) pathways, by sequestering the intracellular domains of activated receptors into ILVs, isolating them from the cytoplasm and targeting them for lysosomal degradation. Involved in targeting ubiquitilated proteins, such as mono-ubiquitilanated N/Notch, to MVBs for degradation. Plays a role in wing development by regulating Notch signaling. Involved in abscission of germline cells during oogenesis. Involved in spermiogenesis. Required for efficient cytoplasmic isolation and abscission during cytokinesis of epithelial sensory organ precursor cells. May be involved in septate junction remodeling and maintenance. The sequence is that of Charged multivesicular body protein 4 from Drosophila melanogaster (Fruit fly).